Here is a 213-residue protein sequence, read N- to C-terminus: Thymidine kinase (213 aa).

Residues 22-29 (GSMFSGKT) and 94-97 (DEAQ) contribute to the ATP site. The active-site Proton acceptor is the Glu-95. Cys-151, Cys-154, Cys-183, and Cys-186 together coordinate Zn(2+). Residues 185–213 (RCFQPPRPTSTSSLKAPAPAATAPRPELP) form a disordered region. A compositionally biased stretch (low complexity) spans 193-213 (TSTSSLKAPAPAATAPRPELP).

The protein belongs to the thymidine kinase family. In terms of assembly, homotetramer.

It localises to the cytoplasm. It carries out the reaction thymidine + ATP = dTMP + ADP + H(+). The chain is Thymidine kinase from Rhodothermus sp. (strain ITI 518).